The chain runs to 436 residues: Trigger factor (436 aa).

In terms of domain architecture, PPIase FKBP-type spans 163-248; it reads TDRVIIDFAG…VKNVAEAILP (86 aa).

Belongs to the FKBP-type PPIase family. Tig subfamily.

It localises to the cytoplasm. It catalyses the reaction [protein]-peptidylproline (omega=180) = [protein]-peptidylproline (omega=0). Its function is as follows. Involved in protein export. Acts as a chaperone by maintaining the newly synthesized protein in an open conformation. Functions as a peptidyl-prolyl cis-trans isomerase. The chain is Trigger factor from Laribacter hongkongensis (strain HLHK9).